Consider the following 70-residue polypeptide: Large ribosomal subunit protein bL28c (70 aa).

It belongs to the bacterial ribosomal protein bL28 family.

The protein localises to the plastid. The protein resides in the cyanelle. This is Large ribosomal subunit protein bL28c (rpl28) from Cyanophora paradoxa.